The sequence spans 118 residues: Immunoglobulin lambda variable 2-8 (118 aa).

The first 19 residues, 1-19 (MAWALLLLTLLTQGTGSWA), serve as a signal peptide directing secretion. Gln20 bears the Pyrrolidone carboxylic acid mark. Residues 20 to 44 (QSALTQPPSASGSPGQSVTISCTGT) are framework-1. The 99-residue stretch at 20 to 118 (QSALTQPPSA…CSSYAGSNNF (99 aa)) folds into the Ig-like domain. The cysteines at positions 41 and 109 are disulfide-linked. The segment at 45-53 (SSDVGGYNY) is complementarity-determining-1. The segment at 54–70 (VSWYQQHPGKAPKLMIY) is framework-2. The interval 71-73 (EVS) is complementarity-determining-2. Residues 74 to 109 (KRPSGVPDRFSGSKSGNTASLTVSGLQAEDEADYYC) form a framework-3 region. The tract at residues 76–97 (PSGVPDRFSGSKSGNTASLTVS) is disordered. Polar residues predominate over residues 85–97 (GSKSGNTASLTVS). A complementarity-determining-3 region spans residues 110–118 (SSYAGSNNF).

Immunoglobulins are composed of two identical heavy chains and two identical light chains; disulfide-linked.

The protein resides in the secreted. The protein localises to the cell membrane. V region of the variable domain of immunoglobulin light chains that participates in the antigen recognition. Immunoglobulins, also known as antibodies, are membrane-bound or secreted glycoproteins produced by B lymphocytes. In the recognition phase of humoral immunity, the membrane-bound immunoglobulins serve as receptors which, upon binding of a specific antigen, trigger the clonal expansion and differentiation of B lymphocytes into immunoglobulins-secreting plasma cells. Secreted immunoglobulins mediate the effector phase of humoral immunity, which results in the elimination of bound antigens. The antigen binding site is formed by the variable domain of one heavy chain, together with that of its associated light chain. Thus, each immunoglobulin has two antigen binding sites with remarkable affinity for a particular antigen. The variable domains are assembled by a process called V-(D)-J rearrangement and can then be subjected to somatic hypermutations which, after exposure to antigen and selection, allow affinity maturation for a particular antigen. This chain is Immunoglobulin lambda variable 2-8, found in Homo sapiens (Human).